The primary structure comprises 356 residues: L-amino acid-D/L-Glu epimerase (356 aa).

Substrate contacts are provided by residues arginine 25, serine 136, and 161 to 163; that span reads KVK. A Mg(2+)-binding site is contributed by aspartate 191. Substrate is bound at residue asparagine 193. Mg(2+) is bound by residues glutamate 219 and aspartate 244. Residues lysine 268, 296-298, and 320-322 contribute to the substrate site; these read CMM and DLD.

The protein belongs to the mandelate racemase/muconate lactonizing enzyme family. Mg(2+) is required as a cofactor.

Functionally, catalyzes the epimerization of dipeptides with L-Glu in the second position. Has epimerase activity with L-Ala-L-Glu, L-Pro-L-Glu, L-Val-L-Glu, L-Thr-L-Glu and L-Met-L-Glu (in vitro). The polypeptide is L-amino acid-D/L-Glu epimerase (Francisella philomiragia subsp. philomiragia (strain ATCC 25017 / CCUG 19701 / FSC 153 / O#319-036)).